Reading from the N-terminus, the 248-residue chain is Triosephosphate isomerase B (248 aa).

Asn-11 and Lys-13 together coordinate substrate. The active-site Electrophile is the His-95. Glu-165 functions as the Proton acceptor in the catalytic mechanism.

Belongs to the triosephosphate isomerase family. As to quaternary structure, homodimer.

It is found in the cytoplasm. The enzyme catalyses dihydroxyacetone phosphate = methylglyoxal + phosphate. It carries out the reaction D-glyceraldehyde 3-phosphate = dihydroxyacetone phosphate. It participates in carbohydrate degradation; glycolysis; D-glyceraldehyde 3-phosphate from glycerone phosphate: step 1/1. The protein operates within carbohydrate biosynthesis; gluconeogenesis. Triosephosphate isomerase is an extremely efficient metabolic enzyme that catalyzes the interconversion between dihydroxyacetone phosphate (DHAP) and D-glyceraldehyde-3-phosphate (G3P) in glycolysis and gluconeogenesis. Its function is as follows. It is also responsible for the non-negligible production of methylglyoxal a reactive cytotoxic side-product that modifies and can alter proteins, DNA and lipids. This chain is Triosephosphate isomerase B (tpi1b), found in Danio rerio (Zebrafish).